The sequence spans 630 residues: Biosynthetic arginine decarboxylase (630 aa).

Lys-99 is modified (N6-(pyridoxal phosphate)lysine). Substrate is bound at residue 281 to 291 (VDIGGGLGVDY).

The protein belongs to the Orn/Lys/Arg decarboxylase class-II family. SpeA subfamily. The cofactor is Mg(2+). Requires pyridoxal 5'-phosphate as cofactor.

It carries out the reaction L-arginine + H(+) = agmatine + CO2. Its pathway is amine and polyamine biosynthesis; agmatine biosynthesis; agmatine from L-arginine: step 1/1. Functionally, catalyzes the biosynthesis of agmatine from arginine. The sequence is that of Biosynthetic arginine decarboxylase from Bacteroides fragilis (strain ATCC 25285 / DSM 2151 / CCUG 4856 / JCM 11019 / LMG 10263 / NCTC 9343 / Onslow / VPI 2553 / EN-2).